Here is a 317-residue protein sequence, read N- to C-terminus: Zinc finger protein 771 (317 aa).

A compositionally biased stretch (acidic residues) spans 1 to 17 (MPGEQQAEEEEEEEMQE). The segment at 1–63 (MPGEQQAEEE…APSADPARPH (63 aa)) is disordered. Residue K33 forms a Glycyl lysine isopeptide (Lys-Gly) (interchain with G-Cter in SUMO2) linkage. A compositionally biased stretch (basic and acidic residues) spans 33 to 49 (KYEVVKLKIPMDNKEVP). 8 consecutive C2H2-type zinc fingers follow at residues 63-85 (HACP…ARTH), 91-113 (FGCT…GRTH), 119-141 (YECP…RRRH), 147-169 (YACA…LRVH), 175-197 (YACP…RRTH), 203-225 (YACA…RRVH), 231-253 (HRCA…ARTH), and 259-281 (YPCA…RRAH).

This sequence belongs to the krueppel C2H2-type zinc-finger protein family.

The protein resides in the nucleus. Functionally, may be involved in transcriptional regulation. In Homo sapiens (Human), this protein is Zinc finger protein 771 (ZNF771).